The primary structure comprises 354 residues: Uroporphyrinogen decarboxylase (354 aa).

Residues 27–31, aspartate 77, tyrosine 154, threonine 209, and histidine 327 contribute to the substrate site; that span reads RQAGR.

This sequence belongs to the uroporphyrinogen decarboxylase family. Homodimer.

It is found in the cytoplasm. It catalyses the reaction uroporphyrinogen III + 4 H(+) = coproporphyrinogen III + 4 CO2. The protein operates within porphyrin-containing compound metabolism; protoporphyrin-IX biosynthesis; coproporphyrinogen-III from 5-aminolevulinate: step 4/4. Catalyzes the decarboxylation of four acetate groups of uroporphyrinogen-III to yield coproporphyrinogen-III. This chain is Uroporphyrinogen decarboxylase, found in Mannheimia succiniciproducens (strain KCTC 0769BP / MBEL55E).